We begin with the raw amino-acid sequence, 227 residues long: MEALKKIAGVTAAQYVTDGMTIGLGTGSTAYYFVEEIGRRVKQEGLQVVGVTTSSVTSKQAEGLGIPLKSIDDIDSIDLTVDGADEVDKDFNGIKGGGAALLMEKIVATPTKEYIWVVDASKMVEHLGAFKLPVEVVQYGADRLFRVFEKAGYKPSFRMKGDSRLVTDMQNYIIDLDLGCIKDPVAFGHLLDGTVGVVEHGLFNGMVDKVIVASKDGVTVLEAPKAG.

Substrate contacts are provided by residues 26-29, 82-85, and 95-98; these read TGST, DGAD, and KGGG. The active-site Proton acceptor is glutamate 104. Position 122 (lysine 122) interacts with substrate.

The protein belongs to the ribose 5-phosphate isomerase family. In terms of assembly, homodimer.

It carries out the reaction aldehydo-D-ribose 5-phosphate = D-ribulose 5-phosphate. It participates in carbohydrate degradation; pentose phosphate pathway; D-ribose 5-phosphate from D-ribulose 5-phosphate (non-oxidative stage): step 1/1. Catalyzes the reversible conversion of ribose-5-phosphate to ribulose 5-phosphate. This chain is Ribose-5-phosphate isomerase A, found in Streptococcus pyogenes serotype M5 (strain Manfredo).